Consider the following 464-residue polypeptide: Protein FAM90A18 (464 aa).

3 disordered regions span residues methionine 1–leucine 42, proline 70–aspartate 387, and histidine 415–proline 437. 2 stretches are compositionally biased toward basic and acidic residues: residues glycine 74 to valine 89 and asparagine 97 to arginine 114. Low complexity predominate over residues leucine 180–leucine 197.

This sequence belongs to the FAM90 family.

The chain is Protein FAM90A18 from Homo sapiens (Human).